Reading from the N-terminus, the 170-residue chain is MTKVAAEIVRSAIDPQWFRAVLGQYPTGVCAVTAMDPDGKMSGMAVGSFTSVSLNPPLVAFLPDRSSTSWPKIERAGKFCVNVLSDQQLGVCKRFASKDEDKFSGLVYRLSDNGSPIIEGVVAWIDCDLHSVQEAGDHYIVIGSVRELQVESEDSALLFYRGGYGGFAAI.

Residues serine 51, histidine 138, and 159–162 (FYRG) contribute to the NAD(+) site.

Belongs to the non-flavoprotein flavin reductase family. As to quaternary structure, homodimer. Likely forms a loose transient complex with monooxygenases for which it provides FMNH(2).

The enzyme catalyses FMNH2 + NAD(+) = FMN + NADH + 2 H(+). It catalyses the reaction FADH2 + NAD(+) = FAD + NADH + 2 H(+). In terms of biological role, catalyzes the reduction of FMN, and to a lesser extent, FAD, using NADH as an electron donor. Is able to provide the FMNH(2) required for the Baeyer-Villiger oxidations catalyzed by 2,5-diketocamphane monooxygenases and 3,6-diketocamphane monooxygenase. NADPH acts as a very poor cosubstrate. This chain is Flavin reductase, found in Pseudomonas putida (Arthrobacter siderocapsulatus).